The chain runs to 308 residues: Ribonuclease HIII (308 aa).

In terms of domain architecture, RNase H type-2 spans 91 to 308; that stretch reads KNVIGSDEVG…TEKALKMVKK (218 aa). 3 residues coordinate a divalent metal cation: Asp97, Glu98, and Asp202.

It belongs to the RNase HII family. RnhC subfamily. It depends on Mn(2+) as a cofactor. The cofactor is Mg(2+).

It localises to the cytoplasm. It catalyses the reaction Endonucleolytic cleavage to 5'-phosphomonoester.. Its function is as follows. Endonuclease that specifically degrades the RNA of RNA-DNA hybrids. The chain is Ribonuclease HIII from Listeria monocytogenes serotype 4b (strain F2365).